A 410-amino-acid polypeptide reads, in one-letter code: Solute carrier family 52, riboflavin transporter, member 3 (410 aa).

The next 3 membrane-spanning stretches (helical) occupy residues 3-23 (ILIY…INGL), 40-60 (LPSY…LVTL), and 73-93 (VVIY…AFFL). N-linked (GlcNAc...) asparagine glycosylation occurs at Asn-157. 6 consecutive transmembrane segments (helical) span residues 158 to 178 (FTTE…LAAF), 239 to 259 (FQLT…NGLL), 277 to 297 (LSAA…MFFP), 301 to 321 (LVFL…NMAM), 334 to 354 (ALGE…LSYV), and 369 to 389 (ALVW…VIMF).

Belongs to the riboflavin transporter family.

The protein localises to the cell membrane. The enzyme catalyses riboflavin(in) = riboflavin(out). In terms of biological role, plasma membrane transporter mediating the uptake by cells of the water soluble vitamin B2/riboflavin that plays a key role in biochemical oxidation-reduction reactions of the carbohydrate, lipid, and amino acid metabolism. In Osmerus mordax (Rainbow smelt), this protein is Solute carrier family 52, riboflavin transporter, member 3 (slc52a3).